A 1496-amino-acid chain; its full sequence is DNA-directed RNA polymerase subunit beta' (1496 aa).

Residues Cys67, Cys69, Cys82, and Cys85 each coordinate Zn(2+). Mg(2+) contacts are provided by Asp499, Asp501, and Asp503. Zn(2+) contacts are provided by Cys867, Cys943, Cys950, and Cys953.

Belongs to the RNA polymerase beta' chain family. As to quaternary structure, the RNAP catalytic core consists of 2 alpha, 1 beta, 1 beta' and 1 omega subunit. When a sigma factor is associated with the core the holoenzyme is formed, which can initiate transcription. Mg(2+) serves as cofactor. It depends on Zn(2+) as a cofactor.

The catalysed reaction is RNA(n) + a ribonucleoside 5'-triphosphate = RNA(n+1) + diphosphate. Functionally, DNA-dependent RNA polymerase catalyzes the transcription of DNA into RNA using the four ribonucleoside triphosphates as substrates. In Chlorobium limicola (strain DSM 245 / NBRC 103803 / 6330), this protein is DNA-directed RNA polymerase subunit beta'.